A 1953-amino-acid polypeptide reads, in one-letter code: Protein BNI1 (1953 aa).

Disordered stretches follow at residues 1–152 (MLKN…ASSL), 230–258 (MRAN…ANSS), 263–282 (KSVL…SNSL), and 287–306 (TLSS…SGSL). Low complexity predominate over residues 31-40 (ANSNATNSNT). 2 stretches are compositionally biased toward polar residues: residues 41–100 (GSPT…SQYM) and 110–143 (VSSQ…RQHT). The GBD/FH3 domain occupies 174–696 (EMPSDPYEVE…NVSVASTSDE (523 aa)). Low complexity predominate over residues 232-246 (ANTTSSSTASRTSMA). Positions 263–278 (KSVLMTSASSPTSTVY) are enriched in polar residues. S311 and S325 each carry phosphoserine. Residues 312–337 (LNNIYRGGAENNTSASTLPGDRTNRP) form a disordered region. 3 coiled-coil regions span residues 712–807 (QTDE…TILN), 864–894 (NKRL…EFEK), and 928–981 (NKLN…YKGF). Disordered regions lie at residues 990–1014 (IMDS…SLDP), 1040–1094 (HEIQ…LDAL), and 1149–1330 (TQKV…MPAS). Residues 1053-1337 (SSSSSDDESE…PASQIKSAVT (285 aa)) form the FH1 domain. S1085 and S1170 each carry phosphoserine. Basic and acidic residues predominate over residues 1184–1211 (DKAEKDMRQHVENGKQGRVVNHEEDKTA). Polar residues predominate over residues 1217–1237 (SKLNNTDGAEDLSTQSSVLSS). A compositionally biased stretch (pro residues) spans 1238 to 1250 (QPPPPPPPPPPVP). Over residues 1257–1270 (SLEKEKKSEDDTVK) the composition is skewed to basic and acidic residues. A compositionally biased stretch (pro residues) spans 1278-1292 (PAPPPPPPPPPPPPM). S1338 and S1344 each carry phosphoserine. Residues 1348 to 1766 (FEKYPRPHKK…YIKHKKIVEE (419 aa)) enclose the FH2 domain. A coiled-coil region spans residues 1732–1811 (KFADFINEYK…DKLLEQLKNA (80 aa)). The span at 1768–1779 (QKRAQEKEKQKE) shows a compositional bias: basic and acidic residues. Disordered regions lie at residues 1768–1797 (QKRA…AEDR), 1809–1844 (KNAG…LLND), and 1872–1899 (PTPL…LEDQ). The 35-residue stretch at 1792–1826 (DEAEDRRAVMDKLLEQLKNAGPAKSDPSSARKRAL) folds into the DAD domain. Positions 1821 to 1830 (ARKRALVRKK) are enriched in basic residues. The span at 1880 to 1896 (VMNTSEDLPSPSKTSAL) shows a compositional bias: polar residues. T1918 carries the post-translational modification Phosphothreonine.

This sequence belongs to the formin homology family. BNI1 subfamily. As to quaternary structure, homodimer, and possibly also homotetramer. Interacts with PFY1 via the FH1 domain and with actin via the FH2 domain.

It is found in the cell membrane. The protein localises to the cell projection. Its subcellular location is the ruffle membrane. It localises to the cytoplasm. The protein resides in the cytoskeleton. Functionally, required for the assembly of F-actin structures, such as actin cables and stress fibers. Nucleates actin filaments. Binds to the barbed end of the actin filament and acts as a leaky capper, slowing both polymerization and depolymerization. Protects the growing actin fiber from tight capping proteins and so increases the time of elongation and the total amount of F-actin. May organize microtubules by mediating spindle positioning and movement in the budding process. Potential target of the RHO family members. The protein is Protein BNI1 (BNI1) of Saccharomyces cerevisiae (strain ATCC 204508 / S288c) (Baker's yeast).